The following is a 263-amino-acid chain: Methylesterase 1 (263 aa).

Residue Ser-85 is the Acyl-ester intermediate of the active site. Active-site charge relay system residues include Asp-213 and His-241.

The protein belongs to the AB hydrolase superfamily. Methylesterase family.

The enzyme catalyses methyl (indol-3-yl)acetate + H2O = (indol-3-yl)acetate + methanol + H(+). The catalysed reaction is methyl (-)-jasmonate + H2O = jasmonate + methanol + H(+). It carries out the reaction methyl salicylate + H2O = salicylate + methanol + H(+). The protein operates within plant hormone biosynthesis. Its pathway is lipid metabolism; oxylipin biosynthesis. Its activity is regulated as follows. Esterase activity is down-regulated by salicylic acid (SA). In terms of biological role, methylesterase shown to have carboxylesterase activity, methyl indole-3-acetic acid (MeIAA) esterase activity, methyl salicylate (MeSA) esterase activity and methyl jasmonate (MeJA) esterase activity in vitro. Required to convert methyl salicylate (MeSA) to salicylic acid (SA) as part of the signal transduction pathways that activate systemic acquired resistance in systemic tissue. MeSA is believed to be an inactive form that needs to be demethylated to exert a biological effect. The sequence is that of Methylesterase 1 from Arabidopsis thaliana (Mouse-ear cress).